The sequence spans 584 residues: MVAPIKILGDRLRRALQAALPLDTYPQPLLVPASQVKFGDYQSNVCLSLAKQLGKAPRELAQEVVPHLEVEDLCQPVEIAGPGFLNFRLKPEFLAATLQAARGSDRLGIPPAREPRRVVVDFSSPNIAKEMHVGHLRSTIIGDCIARILEFQGHTVLRLNHVGDWGTQFGMLIAYLDEVYPDALTTANALDLGDLVTFYKKAKQRFDSDPEFQQKARAKVVALQQGEEQSRRAWQLLCEQSRREFQKIYDLLDIQLTERGESFYNPFLPAVIEDLAACGLLVEDQGAKVVFLEGFTNKEGQPQPLIIQKSDGGYNYATTDLAALRYRIDKDQADWIIYVTDVGQSTHFAQVFQVAQRAGWVPPHVTLTHVPFGLVLGEDGKRLKTRSGETIRLIDLLTEAIARSRADLEQRLATEGRTESPEFIDTVARAIGIGAVKYADLSQNRNSNYVFSYDKMLSLQGNTAPYLLYAYVRVQGLTRRGDIDWCTLSPDSPLLLEDETEQHLAKHLVQLEETLDLVSTELLPNRLCQYLFELSQLFNQFYDRCPILSAPQPTKQSRLTLAYLTAQTLKLGLSLLGIPVLDRI.

A 'HIGH' region motif is present at residues 125 to 135 (PNIAKEMHVGH).

Belongs to the class-I aminoacyl-tRNA synthetase family. As to quaternary structure, monomer.

It localises to the cytoplasm. The enzyme catalyses tRNA(Arg) + L-arginine + ATP = L-arginyl-tRNA(Arg) + AMP + diphosphate. The polypeptide is Arginine--tRNA ligase (Thermosynechococcus vestitus (strain NIES-2133 / IAM M-273 / BP-1)).